A 182-amino-acid polypeptide reads, in one-letter code: MGFKGTTVIAIKKNGKTVVAADGQVLFGHTVLKSNAIKIRKLLNGKILAGFAGSTSDAITLFEKFEEKIKAKGDGLIDIKRAAVDLAKDWRSDKILHKLEAMMLVADSKNILLISGTGDVVEPEEDVISIGSGGNYAYSAALAYMENKKLSAFEVALRSLKIAARVCIYTNSNIVLEEIENE.

Threonine 6 is an active-site residue. Alanine 164, cysteine 167, and threonine 170 together coordinate Na(+).

It belongs to the peptidase T1B family. HslV subfamily. As to quaternary structure, a double ring-shaped homohexamer of HslV is capped on each side by a ring-shaped HslU homohexamer. The assembly of the HslU/HslV complex is dependent on binding of ATP.

It is found in the cytoplasm. The catalysed reaction is ATP-dependent cleavage of peptide bonds with broad specificity.. Allosterically activated by HslU binding. Protease subunit of a proteasome-like degradation complex believed to be a general protein degrading machinery. In Borrelia garinii subsp. bavariensis (strain ATCC BAA-2496 / DSM 23469 / PBi) (Borreliella bavariensis), this protein is ATP-dependent protease subunit HslV.